The primary structure comprises 339 residues: Anthranilate phosphoribosyltransferase (339 aa).

5-phospho-alpha-D-ribose 1-diphosphate contacts are provided by residues glycine 81, 84–85, serine 89, 91–94, 109–117, and alanine 121; these read GD, NVST, and KHGNRALSS. Glycine 81 contributes to the anthranilate binding site. Serine 93 is a Mg(2+) binding site. Asparagine 112 contacts anthranilate. Arginine 167 contributes to the anthranilate binding site. The Mg(2+) site is built by aspartate 226 and glutamate 227.

Belongs to the anthranilate phosphoribosyltransferase family. In terms of assembly, homodimer. Requires Mg(2+) as cofactor.

The catalysed reaction is N-(5-phospho-beta-D-ribosyl)anthranilate + diphosphate = 5-phospho-alpha-D-ribose 1-diphosphate + anthranilate. The protein operates within amino-acid biosynthesis; L-tryptophan biosynthesis; L-tryptophan from chorismate: step 2/5. Catalyzes the transfer of the phosphoribosyl group of 5-phosphorylribose-1-pyrophosphate (PRPP) to anthranilate to yield N-(5'-phosphoribosyl)-anthranilate (PRA). In Rhodopseudomonas palustris (strain BisB18), this protein is Anthranilate phosphoribosyltransferase.